Here is a 422-residue protein sequence, read N- to C-terminus: Chorismate synthase (422 aa).

2 residues coordinate NADP(+): Arg43 and Arg49. FMN is bound by residues 143–145, 264–265, Gly309, 324–328, and Arg350; these read RSS, QA, and KPIST.

It belongs to the chorismate synthase family. In terms of assembly, homotetramer. FMNH2 serves as cofactor.

The enzyme catalyses 5-O-(1-carboxyvinyl)-3-phosphoshikimate = chorismate + phosphate. The protein operates within metabolic intermediate biosynthesis; chorismate biosynthesis; chorismate from D-erythrose 4-phosphate and phosphoenolpyruvate: step 7/7. Its function is as follows. Catalyzes the anti-1,4-elimination of the C-3 phosphate and the C-6 proR hydrogen from 5-enolpyruvylshikimate-3-phosphate (EPSP) to yield chorismate, which is the branch point compound that serves as the starting substrate for the three terminal pathways of aromatic amino acid biosynthesis. This reaction introduces a second double bond into the aromatic ring system. This chain is Chorismate synthase, found in Corynebacterium jeikeium (strain K411).